The chain runs to 332 residues: Glycerol-3-phosphate dehydrogenase [NAD(P)+] (332 aa).

The NADPH site is built by Ser15, Trp16, and Lys110. Sn-glycerol 3-phosphate-binding residues include Lys110, Gly137, and Ser139. Ala141 lines the NADPH pocket. 5 residues coordinate sn-glycerol 3-phosphate: Lys192, Asp245, Ser255, Arg256, and Asn257. The active-site Proton acceptor is Lys192. NADPH is bound at residue Arg256. Residue Glu282 participates in NADPH binding.

This sequence belongs to the NAD-dependent glycerol-3-phosphate dehydrogenase family.

It localises to the cytoplasm. It carries out the reaction sn-glycerol 3-phosphate + NAD(+) = dihydroxyacetone phosphate + NADH + H(+). The enzyme catalyses sn-glycerol 3-phosphate + NADP(+) = dihydroxyacetone phosphate + NADPH + H(+). The protein operates within membrane lipid metabolism; glycerophospholipid metabolism. In terms of biological role, catalyzes the reduction of the glycolytic intermediate dihydroxyacetone phosphate (DHAP) to sn-glycerol 3-phosphate (G3P), the key precursor for phospholipid synthesis. This chain is Glycerol-3-phosphate dehydrogenase [NAD(P)+], found in Coxiella burnetii (strain RSA 331 / Henzerling II).